The following is a 445-amino-acid chain: Putative H/ACA ribonucleoprotein complex subunit 4 (445 aa).

The tract at residues 1-32 is disordered; the sequence is MGKKDKRSKLEGDELAEAQQKGSFQLPSSNET. Residues 20-32 are compositionally biased toward polar residues; that stretch reads QKGSFQLPSSNET. D113 functions as the Nucleophile in the catalytic mechanism. Residues 284–359 form the PUA domain; it reads HKRVVVKDSC…IVAKSKRVIM (76 aa). The disordered stretch occupies residues 407–445; that stretch reads TDKVKKEQEDKEDEEEEEAPKKKSKKAAKKEVSSSSDSE.

It belongs to the pseudouridine synthase TruB family. As to quaternary structure, component of the small nucleolar ribonucleoprotein particle containing H/ACA-type snoRNAs (H/ACA snoRNPs).

It localises to the nucleus. It is found in the nucleolus. The enzyme catalyses a uridine in RNA = a pseudouridine in RNA. Plays a central role in ribosomal RNA processing. Probable catalytic subunit of H/ACA small nucleolar ribonucleoprotein (H/ACA snoRNP) complex, which catalyzes pseudouridylation of rRNA. This involves the isomerization of uridine such that the ribose is subsequently attached to C5, instead of the normal N1. Pseudouridine ('psi') residues may serve to stabilize the conformation of rRNAs. The chain is Putative H/ACA ribonucleoprotein complex subunit 4 from Caenorhabditis briggsae.